The sequence spans 394 residues: Elongation factor Tu 1 (394 aa).

In terms of domain architecture, tr-type G spans 10-204 (KPHVNVGTIG…ALDSYIPEPQ (195 aa)). The G1 stretch occupies residues 19–26 (GHVDHGKT). 19–26 (GHVDHGKT) is a GTP binding site. Thr26 serves as a coordination point for Mg(2+). The interval 60-64 (GITIN) is G2. The segment at 81–84 (DCPG) is G3. GTP contacts are provided by residues 81–85 (DCPGH) and 136–139 (NKCD). The segment at 136–139 (NKCD) is G4. Residues 174-176 (SAL) are G5.

This sequence belongs to the TRAFAC class translation factor GTPase superfamily. Classic translation factor GTPase family. EF-Tu/EF-1A subfamily. Monomer.

Its subcellular location is the cytoplasm. It catalyses the reaction GTP + H2O = GDP + phosphate + H(+). In terms of biological role, GTP hydrolase that promotes the GTP-dependent binding of aminoacyl-tRNA to the A-site of ribosomes during protein biosynthesis. In Shewanella baltica (strain OS195), this protein is Elongation factor Tu 1.